Reading from the N-terminus, the 673-residue chain is MESATISPQPPQSDSLEAFPQKSMEPADIAVLVLYFLFVLAVGLWSTVRTKRDTVKGYFLAGGDMVWWPVGASLFASNVGSGHFIGLAGSGAAVGISVAAYELNGLFSVLMLAWVFLPIYIAGQVTTMPEYLRRRFGGNRISITLAVLYLFIYIFTKISVDMYAGAIFIQQSLHLDLYLAIVGLLAITALYTVAGGLAAVIYTDALQTVIMLIGAFILMGYSFAAVGGMEGLKDQYFLALASNRSENSSCGLPREDAFHIFRDPLTSDLPWPGILFGMSIPSLWYWCTDQVIVQRSLAAKNLSHAKGGSLMAAYLKVLPLFLMVFPGMVSRVLFPDQVACAHPDICQRVCSNPSGCSDIAYPKLVLELLPTGLRGLMMAVMVAALMSSLTSIFNSASTIFTMDLWNHIRPRASERELMIVGRIFVFALVLVSILWIPIVQASQGGQLFIYIQSISSYLQPPVAMVFIMGCFWKRTNEKGAFSGLILGLLLGLVRLILDFVYAQPRCDQPDDRPAVVKDVHYLYFSMILSFTTLITVVTVSWFTETPSKEMVSRLTWFTRHEPVAQKDSAPPETPLSLTLSQNGTTEAPGTSIQLETVQESTTKACGDGVSPRHSKVVRAILWLCGMEKNKEEPPSKAEPVIVSLEENPLVKTLLDVNCIVCISCAIFLWGYFA.

At 1 to 27 (MESATISPQPPQSDSLEAFPQKSMEPA) the chain is on the extracellular side. A helical transmembrane segment spans residues 28–48 (DIAVLVLYFLFVLAVGLWSTV). The Cytoplasmic portion of the chain corresponds to 49–65 (RTKRDTVKGYFLAGGDM). A helical transmembrane segment spans residues 66–88 (VWWPVGASLFASNVGSGHFIGLA). The Extracellular segment spans residues 89-102 (GSGAAVGISVAAYE). A helical transmembrane segment spans residues 103 to 123 (LNGLFSVLMLAWVFLPIYIAG). At 124–148 (QVTTMPEYLRRRFGGNRISITLAVL) the chain is on the cytoplasmic side. Residues 149–169 (YLFIYIFTKISVDMYAGAIFI) form a helical membrane-spanning segment. Topologically, residues 170–180 (QQSLHLDLYLA) are extracellular. The chain crosses the membrane as a helical span at residues 181 to 201 (IVGLLAITALYTVAGGLAAVI). Over 202–208 (YTDALQT) the chain is Cytoplasmic. A helical transmembrane segment spans residues 209-229 (VIMLIGAFILMGYSFAAVGGM). Residues 230 to 272 (EGLKDQYFLALASNRSENSSCGLPREDAFHIFRDPLTSDLPWP) lie on the Extracellular side of the membrane. The helical transmembrane segment at 273 to 293 (GILFGMSIPSLWYWCTDQVIV) threads the bilayer. Residues 294–308 (QRSLAAKNLSHAKGG) are Cytoplasmic-facing. The helical transmembrane segment at 309-329 (SLMAAYLKVLPLFLMVFPGMV) threads the bilayer. Residues 330–375 (SRVLFPDQVACAHPDICQRVCSNPSGCSDIAYPKLVLELLPTGLRG) are Extracellular-facing. Residues 376-396 (LMMAVMVAALMSSLTSIFNSA) traverse the membrane as a helical segment. At 397-418 (STIFTMDLWNHIRPRASERELM) the chain is on the cytoplasmic side. A helical membrane pass occupies residues 419–439 (IVGRIFVFALVLVSILWIPIV). The Extracellular segment spans residues 440–446 (QASQGGQ). Residues 447–467 (LFIYIQSISSYLQPPVAMVFI) form a helical membrane-spanning segment. Over 468–479 (MGCFWKRTNEKG) the chain is Cytoplasmic. The chain crosses the membrane as a helical span at residues 480-500 (AFSGLILGLLLGLVRLILDFV). Residues 501 to 521 (YAQPRCDQPDDRPAVVKDVHY) are Extracellular-facing. The chain crosses the membrane as a helical span at residues 522-542 (LYFSMILSFTTLITVVTVSWF). At 543–652 (TETPSKEMVS…SLEENPLVKT (110 aa)) the chain is on the cytoplasmic side. A helical membrane pass occupies residues 653–673 (LLDVNCIVCISCAIFLWGYFA).

Belongs to the sodium:solute symporter (SSF) (TC 2.A.21) family.

The protein resides in the membrane. The protein localises to the apical cell membrane. It carries out the reaction myo-inositol(out) + 2 Na(+)(out) = myo-inositol(in) + 2 Na(+)(in). It catalyses the reaction 1D-chiro-inositol(out) + 2 Na(+)(out) = 1D-chiro-inositol(in) + 2 Na(+)(in). The catalysed reaction is D-glucose(out) + 2 Na(+)(out) = D-glucose(in) + 2 Na(+)(in). The enzyme catalyses D-xylose(out) + 2 Na(+)(out) = D-xylose(in) + 2 Na(+)(in). MI transport activity inhibited by D-chiro-inositol (DCI), phlorizin (Pz) and sodium (Na(+)). Insulin increases D-chiro-inositol uptake. Involved in the sodium-dependent cotransport of myo-inositol (MI) with a Na(+):MI stoichiometry of 2:1. Exclusively responsible for apical MI transport and absorption in intestine. Can also transport D-chiro-inositol (DCI) but not L-fucose. Exhibits stereospecific cotransport of both D-glucose and D-xylose. May induce apoptosis through the TNF-alpha, PDCD1 pathway. May play a role in the regulation of MI concentration in serum, involving reabsorption in at least the proximal tubule of the kidney. The protein is Sodium/myo-inositol cotransporter 2 of Mus musculus (Mouse).